A 356-amino-acid polypeptide reads, in one-letter code: Leucine-rich repeat and transmembrane domain-containing protein 1 (356 aa).

Residues 1–32 form the signal peptide; it reads MLNEGLCCGAWAMKGTLLLVSSVGLLLPGVGS. The 30-residue stretch at 33-62 folds into the LRRNT domain; the sequence is CPMKCLCHPSSNSVDCSGQGLSKVPRDLPP. Residues 33-299 are Extracellular-facing; sequence CPMKCLCHPS…PTNLRHAVAT (267 aa). LRR repeat units follow at residues 63-84, 87-108, 111-132, 135-156, and 159-180; these read WTVTLLLQDNRIHWLPALAFQS, LLSTLNLSNNSLSNLAAEAFYG, HLRVLNVTQNSLLSIESSFAHA, GLRELDLSSNSLRILPTSLGKP, and NLTVFAVQQNHLLHLDRELLEA. 2 N-linked (GlcNAc...) asparagine glycosylation sites follow: Asn92 and Asn116. Asn159 is a glycosylation site (N-linked (GlcNAc...) asparagine). Residues 192-246 form the LRRCT domain; sequence NPWICDCHLLGLKLWLERFTFQGGETDGAICRLPEPWQGKALLSIPHELYQPCSL. Residues 255-277 show a composition bias toward polar residues; that stretch reads LVQQPGSAPQDAQKSHENSSGQQ. The segment at 255 to 288 is disordered; the sequence is LVQQPGSAPQDAQKSHENSSGQQDPLECEAKPKP. A helical membrane pass occupies residues 300–320; the sequence is VVITGVVCGIVCLMMLAAAIY. Over 321–356 the chain is Cytoplasmic; sequence GCTYAAITAQYQGRPLASARKSEKMGSKELMDSSSA.

It localises to the membrane. In Mus musculus (Mouse), this protein is Leucine-rich repeat and transmembrane domain-containing protein 1 (Lrtm1).